Consider the following 94-residue polypeptide: Mitochondrial import inner membrane translocase subunit Tim8 A (94 aa).

Residues 47-70 (CWDKCIDRPGNKLDSRTESCLVSC) carry the Twin CX3C motif motif. 2 cysteine pairs are disulfide-bonded: Cys-47–Cys-70 and Cys-51–Cys-66.

The protein belongs to the small Tim family. As to quaternary structure, heterohexamer; composed of 3 copies of TIMM8A and 3 copies of TIMM13, named soluble 70 kDa complex. Associates with the TIM22 complex, whose core is composed of TIMM22.

It localises to the mitochondrion inner membrane. Mitochondrial intermembrane chaperone that participates in the import and insertion of some multi-pass transmembrane proteins into the mitochondrial inner membrane. Also required for the transfer of beta-barrel precursors from the TOM complex to the sorting and assembly machinery (SAM complex) of the outer membrane. Acts as a chaperone-like protein that protects the hydrophobic precursors from aggregation and guide them through the mitochondrial intermembrane space. The TIMM8-TIMM13 complex mediates the import of some proteins while the predominant TIMM9-TIMM10 70 kDa complex mediates the import of much more proteins. This Xenopus laevis (African clawed frog) protein is Mitochondrial import inner membrane translocase subunit Tim8 A (timm8a).